The primary structure comprises 89 residues: Small ribosomal subunit protein uS15 (89 aa).

It belongs to the universal ribosomal protein uS15 family. Part of the 30S ribosomal subunit. Forms a bridge to the 50S subunit in the 70S ribosome, contacting the 23S rRNA.

In terms of biological role, one of the primary rRNA binding proteins, it binds directly to 16S rRNA where it helps nucleate assembly of the platform of the 30S subunit by binding and bridging several RNA helices of the 16S rRNA. Functionally, forms an intersubunit bridge (bridge B4) with the 23S rRNA of the 50S subunit in the ribosome. In Lactobacillus helveticus (strain DPC 4571), this protein is Small ribosomal subunit protein uS15.